The sequence spans 647 residues: tRNA uridine 5-carboxymethylaminomethyl modification enzyme MnmG (647 aa).

FAD contacts are provided by residues 22–27 (GAGHAG), Val134, and Ser189. 283–297 (GARYCPSIEDKIMRF) provides a ligand contact to NAD(+). Gln380 provides a ligand contact to FAD.

This sequence belongs to the MnmG family. Homodimer. Heterotetramer of two MnmE and two MnmG subunits. Requires FAD as cofactor.

The protein localises to the cytoplasm. Functionally, NAD-binding protein involved in the addition of a carboxymethylaminomethyl (cmnm) group at the wobble position (U34) of certain tRNAs, forming tRNA-cmnm(5)s(2)U34. This Desulfotalea psychrophila (strain LSv54 / DSM 12343) protein is tRNA uridine 5-carboxymethylaminomethyl modification enzyme MnmG.